Here is a 330-residue protein sequence, read N- to C-terminus: Aspartate--ammonia ligase (330 aa).

The protein belongs to the class-II aminoacyl-tRNA synthetase family. AsnA subfamily.

Its subcellular location is the cytoplasm. The enzyme catalyses L-aspartate + NH4(+) + ATP = L-asparagine + AMP + diphosphate + H(+). It functions in the pathway amino-acid biosynthesis; L-asparagine biosynthesis; L-asparagine from L-aspartate (ammonia route): step 1/1. The sequence is that of Aspartate--ammonia ligase from Salmonella paratyphi A (strain ATCC 9150 / SARB42).